A 102-amino-acid chain; its full sequence is Small ribosomal subunit protein uS10 (102 aa).

The segment at L34–T58 is disordered.

It belongs to the universal ribosomal protein uS10 family. As to quaternary structure, part of the 30S ribosomal subunit.

In terms of biological role, involved in the binding of tRNA to the ribosomes. The chain is Small ribosomal subunit protein uS10 from Natronomonas pharaonis (strain ATCC 35678 / DSM 2160 / CIP 103997 / JCM 8858 / NBRC 14720 / NCIMB 2260 / Gabara) (Halobacterium pharaonis).